We begin with the raw amino-acid sequence, 350 residues long: Quinone oxidoreductase-like protein 2 (350 aa).

Position 36 is an N6-acetyllysine (Lys36). N6-succinyllysine is present on Lys201. An N6-acetyllysine mark is found at Lys302 and Lys328.

Belongs to the zinc-containing alcohol dehydrogenase family. Quinone oxidoreductase subfamily.

This is Quinone oxidoreductase-like protein 2 from Mus musculus (Mouse).